Here is a 482-residue protein sequence, read N- to C-terminus: Protein DETOXIFICATION 9 (482 aa).

12 consecutive transmembrane segments (helical) span residues 32-49 (VASM…QYLL), 64-84 (ALAG…GVLF), 111-131 (FTSI…WMFM), 144-164 (IAEL…GYSV), 180-200 (PMVL…WLMV), 209-229 (GAAA…WVYM), 261-281 (AMMC…SGLL), 289-309 (SVIS…NGIG), 332-352 (AAAA…SLFL), 374-394 (ITPI…LSGI), 403-423 (IGAY…GLLL), and 435-455 (WAGL…VIGF).

The protein belongs to the multi antimicrobial extrusion (MATE) (TC 2.A.66.1) family.

The protein localises to the membrane. This Arabidopsis thaliana (Mouse-ear cress) protein is Protein DETOXIFICATION 9.